Here is a 416-residue protein sequence, read N- to C-terminus: 2-amino-3-ketobutyrate coenzyme A ligase, mitochondrial (416 aa).

A mitochondrion-targeting transit peptide spans 1 to 18; sequence MWASFMWHGALSPGRRAH. Lysine 42 carries the post-translational modification N6-acetyllysine; alternate. Lysine 42 carries the post-translational modification N6-succinyllysine; alternate. 131 to 132 contributes to the pyridoxal 5'-phosphate binding site; that stretch reads CF. Histidine 156 contributes to the substrate binding site. The residue at position 184 (lysine 184) is an N6-acetyllysine; alternate. Residue lysine 184 is modified to N6-succinyllysine; alternate. Pyridoxal 5'-phosphate is bound by residues serine 203, 259–262, and 292–293; these read TLGK and SN. An N6-(pyridoxal phosphate)lysine modification is found at lysine 262. N6-succinyllysine is present on residues lysine 323 and lysine 365. Lysine 380 bears the N6-acetyllysine; alternate mark. N6-succinyllysine; alternate is present on lysine 380. Arginine 386 is a substrate binding site.

This sequence belongs to the class-II pyridoxal-phosphate-dependent aminotransferase family. Pyridoxal 5'-phosphate is required as a cofactor.

It is found in the mitochondrion. It localises to the nucleus. It catalyses the reaction glycine + acetyl-CoA = (2S)-2-amino-3-oxobutanoate + CoA. Its pathway is amino-acid degradation; L-threonine degradation via oxydo-reductase pathway; glycine from L-threonine: step 2/2. In terms of biological role, pyridoxal phosphate (PLP) dependent enzyme, which catalyzes the cleavage of 2-amino-3-oxobutanoate to glycine and acetyl-CoA. Catalyzes the second reaction step on the main metabolic degradation pathway for L-threonine. The sequence is that of 2-amino-3-ketobutyrate coenzyme A ligase, mitochondrial (Gcat) from Mus musculus (Mouse).